The sequence spans 226 residues: Leucyl/phenylalanyl-tRNA--protein transferase (226 aa).

This sequence belongs to the L/F-transferase family.

The protein resides in the cytoplasm. It carries out the reaction N-terminal L-lysyl-[protein] + L-leucyl-tRNA(Leu) = N-terminal L-leucyl-L-lysyl-[protein] + tRNA(Leu) + H(+). It catalyses the reaction N-terminal L-arginyl-[protein] + L-leucyl-tRNA(Leu) = N-terminal L-leucyl-L-arginyl-[protein] + tRNA(Leu) + H(+). The catalysed reaction is L-phenylalanyl-tRNA(Phe) + an N-terminal L-alpha-aminoacyl-[protein] = an N-terminal L-phenylalanyl-L-alpha-aminoacyl-[protein] + tRNA(Phe). Functions in the N-end rule pathway of protein degradation where it conjugates Leu, Phe and, less efficiently, Met from aminoacyl-tRNAs to the N-termini of proteins containing an N-terminal arginine or lysine. This is Leucyl/phenylalanyl-tRNA--protein transferase from Pseudomonas putida (strain W619).